We begin with the raw amino-acid sequence, 394 residues long: 1-deoxy-D-xylulose 5-phosphate reductoisomerase (394 aa).

NADPH is bound by residues Thr12, Gly13, Ser14, Ile15, Lys39, Gln40, and Asn126. A 1-deoxy-D-xylulose 5-phosphate-binding site is contributed by Lys127. An NADPH-binding site is contributed by Glu128. Asp152 contributes to the Mn(2+) binding site. 4 residues coordinate 1-deoxy-D-xylulose 5-phosphate: Ser153, Glu154, Ser183, and His206. Glu154 is a binding site for Mn(2+). Residue Gly212 coordinates NADPH. Positions 219, 224, 225, and 228 each coordinate 1-deoxy-D-xylulose 5-phosphate. Glu228 lines the Mn(2+) pocket.

Belongs to the DXR family. Mg(2+) serves as cofactor. Requires Mn(2+) as cofactor.

It catalyses the reaction 2-C-methyl-D-erythritol 4-phosphate + NADP(+) = 1-deoxy-D-xylulose 5-phosphate + NADPH + H(+). It functions in the pathway isoprenoid biosynthesis; isopentenyl diphosphate biosynthesis via DXP pathway; isopentenyl diphosphate from 1-deoxy-D-xylulose 5-phosphate: step 1/6. Catalyzes the NADPH-dependent rearrangement and reduction of 1-deoxy-D-xylulose-5-phosphate (DXP) to 2-C-methyl-D-erythritol 4-phosphate (MEP). This Neisseria meningitidis serogroup B (strain ATCC BAA-335 / MC58) protein is 1-deoxy-D-xylulose 5-phosphate reductoisomerase.